Here is a 1214-residue protein sequence, read N- to C-terminus: Transient receptor potential cation channel subfamily M member 4 (1214 aa).

Over 1-782 (MVVPEKEQSW…FHFWGAPVTI (782 aa)) the chain is Cytoplasmic. 3 residues coordinate ATP: R171, R214, and L225. Residues D270, A392, D395, and E396 each coordinate Ca(2+). R421 and G448 together coordinate ATP. The helical transmembrane segment at 783–803 (FMGNVVSYLLFLLLFSRVLLV) threads the bilayer. The Extracellular segment spans residues 804–814 (DFQPAPPGSLE). A helical transmembrane segment spans residues 815 to 835 (LLLYFWAFTLLCEELRQGLSG). Positions 828 and 831 each coordinate Ca(2+). The Cytoplasmic segment spans residues 836–863 (GGGSLASGGPGPGHASLSQRLRLYLADS). A helical transmembrane segment spans residues 864–884 (WNQCDLVALTCFLLGVGCRLT). Positions 865 and 868 each coordinate Ca(2+). Residues 885–886 (PG) are Extracellular-facing. Residues 887-910 (LYHLGRTVLCIDFMVFTVRLLHIF) traverse the membrane as a helical segment. The Cytoplasmic portion of the chain corresponds to 911–930 (TVNKQLGPKIVIVSKMMKDV). Residues 931–951 (FFFLFFLGVWLVAYGVATEGL) form a helical membrane-spanning segment. Over 952-963 (LRPRDSDFPSIL) the chain is Extracellular. Residues 964–984 (RRVFYRPYLQIFGQIPQEDMD) constitute an intramembrane region (pore-forming). Residues 975–977 (FGQ) carry the Selectivity filter motif. Residues 985 to 1019 (VALMEHSNCSSEPGFWAHPPGAQAGTCVSQYANWL) are Extracellular-facing. N992 carries N-linked (GlcNAc...) asparagine glycosylation. The cysteines at positions 993 and 1011 are disulfide-linked. The helical transmembrane segment at 1020–1040 (VVLLLVIFLLVANILLVNLLI) threads the bilayer. Topologically, residues 1041-1214 (AMFSYTFGKV…PPPDLPGSKD (174 aa)) are cytoplasmic. The interval 1076 to 1176 (APPFIVISHL…EYEQRLKVLE (101 aa)) is calmodulin-binding. Residues 1134 to 1187 (LARARDKRESDSERLKRTSQKVDLALKQLGHIREYEQRLKVLEREVQQCSRVLG) adopt a coiled-coil conformation. Residues 1136-1141 (RARDKR) are mediates modulation by decavanadate and PIP2-binding. Phosphoserine; by PKC is present on residues S1145 and S1152.

The protein belongs to the transient receptor (TC 1.A.4) family. LTrpC subfamily. TRPM4 sub-subfamily. In terms of assembly, homotetramer. In terms of processing, phosphorylation by PKC leads to increase the sensitivity to Ca(2+). Post-translationally, sumoylated. Desumoylated by SENP1. As to expression, widely expressed with a high expression in intestine and prostate. In brain, it is both expressed in whole cerebral arteries and isolated vascular smooth muscle cells. Prominently expressed in Purkinje fibers. Expressed at higher levels in T-helper 2 (Th2) cells as compared to T-helper 1 (Th1) cells. Expressed in keratocytes.

The protein localises to the cell membrane. Its subcellular location is the endoplasmic reticulum. The protein resides in the golgi apparatus. The catalysed reaction is Na(+)(in) = Na(+)(out). It carries out the reaction K(+)(in) = K(+)(out). Displays weak voltage dependence, and repressed by decavanadate. Calmodulin-binding confers the Ca(2+) sensitivity. ATP is able to restore Ca(2+) sensitivity after desensitization. ATP inhibits channel activity. Phosphatidylinositol 4,5-bisphosphate (PIP2)-binding strongly enhances activity, by increasing the channel's Ca(2+) sensitivity and shifting its voltage dependence of activation towards negative potentials. Activity is also enhanced by 3,5-bis(trifluoromethyl)pyrazole derivative (BTP2). Exhibits pronounced temperature sensitivity, with activities strongly intensifying near physiological temperatures. Its function is as follows. Calcium-activated selective cation channel that mediates membrane depolarization. While it is activated by increase in intracellular Ca(2+), it is impermeable to it. Mediates transport of monovalent cations (Na(+) &gt; K(+) &gt; Cs(+) &gt; Li(+)), leading to depolarize the membrane. It thereby plays a central role in cadiomyocytes, neurons from entorhinal cortex, dorsal root and vomeronasal neurons, endocrine pancreas cells, kidney epithelial cells, cochlea hair cells etc. Participates in T-cell activation by modulating Ca(2+) oscillations after T lymphocyte activation, which is required for NFAT-dependent IL2 production. Involved in myogenic constriction of cerebral arteries. Controls insulin secretion in pancreatic beta-cells. May also be involved in pacemaking or could cause irregular electrical activity under conditions of Ca(2+) overload. Affects T-helper 1 (Th1) and T-helper 2 (Th2) cell motility and cytokine production through differential regulation of calcium signaling and NFATC1 localization. Enhances cell proliferation through up-regulation of the beta-catenin signaling pathway. Plays a role in keratinocyte differentiation. In terms of biological role, lacks channel activity. The sequence is that of Transient receptor potential cation channel subfamily M member 4 from Homo sapiens (Human).